Consider the following 344-residue polypeptide: Dihydroorotase (344 aa).

The Zn(2+) site is built by H13 and H15. Substrate contacts are provided by residues 15–17 and N41; that span reads HLR. The Zn(2+) site is built by K99, H136, and H174. The residue at position 99 (K99) is an N6-carboxylysine. H136 is a binding site for substrate. Residue L219 participates in substrate binding. D247 lines the Zn(2+) pocket. Residue D247 is part of the active site. Positions 251 and 263 each coordinate substrate.

The protein belongs to the metallo-dependent hydrolases superfamily. DHOase family. Class II DHOase subfamily. Homodimer. Zn(2+) is required as a cofactor.

The enzyme catalyses (S)-dihydroorotate + H2O = N-carbamoyl-L-aspartate + H(+). It functions in the pathway pyrimidine metabolism; UMP biosynthesis via de novo pathway; (S)-dihydroorotate from bicarbonate: step 3/3. Catalyzes the reversible cyclization of carbamoyl aspartate to dihydroorotate. This Microcystis aeruginosa (strain NIES-843 / IAM M-2473) protein is Dihydroorotase.